We begin with the raw amino-acid sequence, 494 residues long: Cytochrome P450 monooxygenase acrF (494 aa).

Heme is bound at residue Cys420.

It belongs to the cytochrome P450 family. Heme is required as a cofactor.

It functions in the pathway secondary metabolite biosynthesis. In terms of biological role, cytochrome P450 monooxygenase; part of the cluster that mediates the biosynthesis of acurin A, a highly reduced polyketide coupled to a serine via a peptide bond. The activities of the highly reducing polyketide synthase acrA and the nonribosomal peptide synthetase acrB are collectively responsible for the synthesis of the acurin A core structure with a heptaketide backbone produced by acrA covalently fused to a L-serine by acrB. After the formation of the PK-NRP hybrid product, it is detached from acrB by reductive release to set up the formation of the lactam ring by aldol condensation. The hydrolyase acrC then catalyzes water loss to generate a double bond in the ring. This double bond is probably reduced, which is followed by three oxidations at C-22 to generate the carboxylic acid moiety, involving probably the FAD-binding monooxygenase acrE and the cytochrome P450 monooxygenases acrD and acrF. Finally, a last methylation step performed by the O-methyltransferase acrG leads to the production of acurin A. This is Cytochrome P450 monooxygenase acrF from Aspergillus aculeatus (strain ATCC 16872 / CBS 172.66 / WB 5094).